The chain runs to 359 residues: DNA-directed RNA polymerase RPB3-11 homolog (359 aa).

It in the N-terminal section; belongs to the archaeal RpoD/eukaryotic RPB3 RNA polymerase subunit family. This sequence in the C-terminal section; belongs to the archaeal RpoL/eukaryotic RPB11/RPC19 RNA polymerase subunit family. In terms of assembly, part of the viral DNA-directed RNA polymerase that consists of 8 polII-like subunits (RPB1, RPB2, RPB3, RPB5, RPB6, RPB7, RPB9, RPB10), a capping enzyme and a termination factor.

It localises to the host cytoplasm. The protein resides in the virion. Its function is as follows. Component of the DNA-directed RNA polymerase (RNAP) that catalyzes the transcription in the cytoplasm of viral DNA into RNA using the four ribonucleoside triphosphates as substrates. In Ornithodoros (relapsing fever ticks), this protein is DNA-directed RNA polymerase RPB3-11 homolog.